The primary structure comprises 257 residues: tRNA pseudouridine synthase A (257 aa).

The active-site Nucleophile is D57. Residue Y115 coordinates substrate.

Belongs to the tRNA pseudouridine synthase TruA family. Homodimer.

The catalysed reaction is uridine(38/39/40) in tRNA = pseudouridine(38/39/40) in tRNA. In terms of biological role, formation of pseudouridine at positions 38, 39 and 40 in the anticodon stem and loop of transfer RNAs. The protein is tRNA pseudouridine synthase A of Lawsonia intracellularis (strain PHE/MN1-00).